Consider the following 263-residue polypeptide: Troponin T, slow skeletal muscle (263 aa).

Over residues 1-38 (MSDAEEQEYEEEQPEEEEAAEEEEEAPEEPEPAAEPEE) the composition is skewed to acidic residues. 2 disordered regions span residues 1–64 (MSDA…RVDF) and 109–154 (AERA…KKKV). Position 2 is a phosphoserine; by CK2 (Ser2). Pro residues predominate over residues 44 to 56 (SRPVVPPLIPPKI). Basic and acidic residues predominate over residues 109-150 (AERAEQQRFRTEKERERQAKLAEEKMRKEEEEAKKRAEDDAK).

Belongs to the troponin T family. Interacts with TPM3. As to expression, expressed dominantly in slow muscles, like masseter, diaphragm, psoas major and spinnalis. Isoform 2 is also expressed in fast muscles.

Troponin T is the tropomyosin-binding subunit of troponin, the thin filament regulatory complex which confers calcium-sensitivity to striated muscle actomyosin ATPase activity. This is Troponin T, slow skeletal muscle (TNNT1) from Bos taurus (Bovine).